The following is a 152-amino-acid chain: Large ribosomal subunit protein bL9 (152 aa).

It belongs to the bacterial ribosomal protein bL9 family.

In terms of biological role, binds to the 23S rRNA. The polypeptide is Large ribosomal subunit protein bL9 (Thermosynechococcus vestitus (strain NIES-2133 / IAM M-273 / BP-1)).